A 449-amino-acid polypeptide reads, in one-letter code: GTPase Der (449 aa).

2 EngA-type G domains span residues 4–174 (PIVA…PPKT) and 183–358 (LRVA…AQRQ). GTP contacts are provided by residues 10–17 (GRPNVGKS), 57–61 (DTAGL), 126–129 (NKCD), 189–196 (GRPNVGKS), 236–240 (DTAGI), and 301–304 (NKWD). Positions 359 to 444 (KRIPTSELNN…PIVIVFRSRE (86 aa)) constitute a KH-like domain.

The protein belongs to the TRAFAC class TrmE-Era-EngA-EngB-Septin-like GTPase superfamily. EngA (Der) GTPase family. Associates with the 50S ribosomal subunit.

Its function is as follows. GTPase that plays an essential role in the late steps of ribosome biogenesis. The polypeptide is GTPase Der (Chloroflexus aggregans (strain MD-66 / DSM 9485)).